The primary structure comprises 90 residues: MDPLRAQQLAAELEVEMMADMYNRMTSACHRKCVPPHYKEAELSKGESVCLDRCVSKYLDIHERMGKKLTELSMQDEELMKRAQQSSGPV.

The Twin CX3C motif motif lies at cysteine 29–cysteine 54. Disulfide bonds link cysteine 29–cysteine 54 and cysteine 33–cysteine 50.

It belongs to the small Tim family. Heterohexamer; composed of 3 copies of TIMM9 and 3 copies of TIMM10/TIM10A, named soluble 70 kDa complex. The complex forms a 6-bladed alpha-propeller structure and associates with the TIMM22 component of the TIM22 complex. Interacts with multi-pass transmembrane proteins in transit. Also forms a complex composed of TIMM9, TIMM10/TIM10A and FXC1/TIM10B.

The protein resides in the mitochondrion inner membrane. In terms of biological role, mitochondrial intermembrane chaperone that participates in the import and insertion of multi-pass transmembrane proteins into the mitochondrial inner membrane. May also be required for the transfer of beta-barrel precursors from the TOM complex to the sorting and assembly machinery (SAM complex) of the outer membrane. Acts as a chaperone-like protein that protects the hydrophobic precursors from aggregation and guide them through the mitochondrial intermembrane space. This chain is Mitochondrial import inner membrane translocase subunit Tim10 (TIMM10), found in Bos taurus (Bovine).